Consider the following 79-residue polypeptide: Hematopoietic cell signal transducer (79 aa).

The N-terminal stretch at 1–18 (MIHPGHILFLLLLPVAAA) is a signal peptide. The Extracellular segment spans residues 19–34 (QTTPGSCSGCGSLSLP). The chain crosses the membrane as a helical span at residues 35 to 55 (LLAGLVAADAVASPLIVGAVF). Residues 56–79 (LCARPRRSPAQGDGKVYINMPGRG) lie on the Cytoplasmic side of the membrane. A Phosphotyrosine modification is found at Tyr72. The segment at 72-74 (YIN) is GRB2 binding site. Positions 72 to 75 (YINM) are PIK3R1 binding site.

It belongs to the DAP10 family. Homodimer; Disulfide-linked. Heterohexamer composed of four subunits of HCST/DAP10 and two subunits of KLRK1. Interacts (via transmembrane domain) with KLRK1 (via transmembrane domain); the interaction is required for KLRK1 NK cell surface and induces NK cell-mediated cytotoxicity. Interacts with PIK3R1 and GRB2. Interacts with CLEC5A. Forms an CLEC5A/TYROBP/HCST trimolecular complex depending almost solely on TYROBP. Interacts with CD300H. In terms of processing, phosphorylated; PIK3R1 and GRB2 associate specifically with tyrosine-phosphorylated HCST. Post-translationally, O-glycosylated.

It localises to the membrane. Transmembrane adapter protein which associates with KLRK1 to form an activation receptor KLRK1-HCST in lymphoid and myeloid cells; this receptor plays a major role in triggering cytotoxicity against target cells expressing cell surface ligands such as MHC class I chain-related MICA and MICB, and UL16-binding proteins (ULBPs); these ligands are up-regulated by stress conditions and pathological state such as viral infection and tumor transformation. Functions as a docking site for PI3-kinase PIK3R1 and GRB2. Interaction of ULBPs with KLRK1-HCST triggers calcium mobilization and activation of the PIK3R1, MAP2K/ERK, and JAK2/STAT5 signaling pathways. Both PIK3R1 and GRB2 are required for full KLRK1-HCST-mediated activation and ultimate killing of target cells. In NK cells, KLRK1-HCST signaling directly induces cytotoxicity and enhances cytokine production initiated via DAP12/TYROBP-associated receptors. In T-cells, it provides primarily costimulation for TCR-induced signals. KLRK1-HCST receptor plays a role in immune surveillance against tumors and is required for cytolysis of tumors cells; indeed, melanoma cells that do not express KLRK1 ligands escape from immune surveillance mediated by NK cells. The protein is Hematopoietic cell signal transducer (HCST) of Macaca mulatta (Rhesus macaque).